Consider the following 843-residue polypeptide: Protein P (843 aa).

The interval 1-177 (MPLSYQHFRK…FCGSPYSWEQ (177 aa)) is terminal protein domain (TP). Residues 178 to 346 (DLQHGRLVFQ…YCLCHIVNLI (169 aa)) form a spacer region. 2 disordered regions span residues 220–269 (KSRL…HNCA) and 291–316 (TSKG…RSRS). The tract at residues 347 to 690 (EDWGPCTEHG…YLNLYPVARQ (344 aa)) is polymerase/reverse transcriptase domain (RT). Residues 357 to 600 (EHRIRTPRTP…YSLNFMGYVI (244 aa)) enclose the Reverse transcriptase domain. Aspartate 429, aspartate 551, and aspartate 552 together coordinate Mg(2+).

Belongs to the hepadnaviridae P protein family.

It catalyses the reaction DNA(n) + a 2'-deoxyribonucleoside 5'-triphosphate = DNA(n+1) + diphosphate. It carries out the reaction Endonucleolytic cleavage to 5'-phosphomonoester.. With respect to regulation, activated by host HSP70 and HSP40 in vitro to be able to bind the epsilon loop of the pgRNA. Because deletion of the RNase H region renders the protein partly chaperone-independent, the chaperones may be needed indirectly to relieve occlusion of the RNA-binding site by this domain. Inhibited by several reverse-transcriptase inhibitors: Lamivudine, Adefovir and Entecavir. In terms of biological role, multifunctional enzyme that converts the viral RNA genome into dsDNA in viral cytoplasmic capsids. This enzyme displays a DNA polymerase activity that can copy either DNA or RNA templates, and a ribonuclease H (RNase H) activity that cleaves the RNA strand of RNA-DNA heteroduplexes in a partially processive 3'- to 5'-endonucleasic mode. Neo-synthesized pregenomic RNA (pgRNA) are encapsidated together with the P protein, and reverse-transcribed inside the nucleocapsid. Initiation of reverse-transcription occurs first by binding the epsilon loop on the pgRNA genome, and is initiated by protein priming, thereby the 5'-end of (-)DNA is covalently linked to P protein. Partial (+)DNA is synthesized from the (-)DNA template and generates the relaxed circular DNA (RC-DNA) genome. After budding and infection, the RC-DNA migrates in the nucleus, and is converted into a plasmid-like covalently closed circular DNA (cccDNA). The activity of P protein does not seem to be necessary for cccDNA generation, and is presumably released from (+)DNA by host nuclear DNA repair machinery. The protein is Protein P of Homo sapiens (Human).